The sequence spans 113 residues: Small ribosomal subunit protein bS6 (113 aa).

Belongs to the bacterial ribosomal protein bS6 family.

In terms of biological role, binds together with bS18 to 16S ribosomal RNA. The protein is Small ribosomal subunit protein bS6 of Wigglesworthia glossinidia brevipalpis.